The sequence spans 223 residues: Cytidylate kinase (223 aa).

17–25 serves as a coordination point for ATP; it reads GPTASGKGT.

It belongs to the cytidylate kinase family. Type 1 subfamily.

It localises to the cytoplasm. It catalyses the reaction CMP + ATP = CDP + ADP. The catalysed reaction is dCMP + ATP = dCDP + ADP. The protein is Cytidylate kinase of Bordetella pertussis (strain Tohama I / ATCC BAA-589 / NCTC 13251).